A 315-amino-acid polypeptide reads, in one-letter code: Ribosomal protein L11 methyltransferase (315 aa).

Threonine 152, glycine 185, aspartate 207, and asparagine 249 together coordinate S-adenosyl-L-methionine.

The protein belongs to the methyltransferase superfamily. PrmA family.

It is found in the cytoplasm. The enzyme catalyses L-lysyl-[protein] + 3 S-adenosyl-L-methionine = N(6),N(6),N(6)-trimethyl-L-lysyl-[protein] + 3 S-adenosyl-L-homocysteine + 3 H(+). Its function is as follows. Methylates ribosomal protein L11. This is Ribosomal protein L11 methyltransferase from Geotalea uraniireducens (strain Rf4) (Geobacter uraniireducens).